A 41-amino-acid chain; its full sequence is Divisome-associated membrane protein Blr (41 aa).

At 1–3 (MNR) the chain is on the cytoplasmic side. A helical transmembrane segment spans residues 4–24 (LIELTGWIVLVVSVILLGVAS). The Periplasmic segment spans residues 25 to 41 (HIDNYQPPEQSASVQHK).

Interacts with FtsL and several other divisomal proteins, including FtsI, FtsK, FtsN, FtsQ, FtsW and YmgF. In terms of processing, the N-terminus is blocked.

The protein resides in the cell inner membrane. In terms of biological role, component of the cell division machinery, which is probably involved in the stabilization of the divisome under certain stress conditions. This Escherichia coli (strain K12) protein is Divisome-associated membrane protein Blr (blr).